A 527-amino-acid polypeptide reads, in one-letter code: Sulfate adenylyltransferase (527 aa).

An N-terminal region spans residues Met-1–Tyr-176. The tract at residues Asp-177 to Lys-406 is catalytic. Residue Gln-206 coordinates sulfate. Residues Gln-206–Asn-209 and Gly-302–His-305 contribute to the ATP site. Catalysis depends on residues Thr-207, Arg-208, and Asn-209. Arg-208 contacts sulfate. Ala-306 is a sulfate binding site. Val-344 serves as a coordination point for ATP. The segment at Gln-407–Tyr-527 is required for oligomerization; adenylyl-sulfate kinase-like.

This sequence belongs to the sulfate adenylyltransferase family. As to quaternary structure, homohexamer. Dimer of trimers.

It is found in the cytoplasm. It catalyses the reaction sulfate + ATP + H(+) = adenosine 5'-phosphosulfate + diphosphate. It functions in the pathway sulfur metabolism; hydrogen sulfide biosynthesis; sulfite from sulfate: step 1/3. Its function is as follows. Catalyzes the first intracellular reaction of sulfate assimilation, forming adenosine-5'-phosphosulfate (APS) from inorganic sulfate and ATP. Plays an important role in sulfate activation as a component of the biosynthesis pathway of sulfur-containing amino acids. This is Sulfate adenylyltransferase from Candida albicans (strain SC5314 / ATCC MYA-2876) (Yeast).